We begin with the raw amino-acid sequence, 95 residues long: Bombyxin F-1 (95 aa).

Positions 1-19 (MKLVVIVLLVISVSILVSA) are cleaved as a signal peptide. Cystine bridges form between C29/C82, C41/C95, and C81/C86. The propeptide at 53-71 (NSDMVYEDSGMPELLPADT) is c peptide like.

Belongs to the insulin family. As to quaternary structure, heterodimer of a B chain and an A chain linked by two disulfide bonds.

The protein resides in the secreted. The polypeptide is Bombyxin F-1 (BBXF1) (Bombyx mori (Silk moth)).